We begin with the raw amino-acid sequence, 88 residues long: Defensin-like protein 24 (88 aa).

A signal peptide spans 1-23 (MASSKFVLFAILALSLLLSGTEA). 4 disulfides stabilise this stretch: Cys37–Cys87, Cys47–Cys72, Cys56–Cys83, and Cys60–Cys85.

Belongs to the DEFL family.

Its subcellular location is the secreted. In Arabidopsis thaliana (Mouse-ear cress), this protein is Defensin-like protein 24.